The primary structure comprises 78 residues: Large ribosomal subunit protein bL28 (78 aa).

Residues 1 to 24 (MSKVCQVTGKRPASGNNVSHAHNK) are disordered.

This sequence belongs to the bacterial ribosomal protein bL28 family.

The polypeptide is Large ribosomal subunit protein bL28 (Nitrosococcus oceani (strain ATCC 19707 / BCRC 17464 / JCM 30415 / NCIMB 11848 / C-107)).